A 203-amino-acid chain; its full sequence is MQKFNSLTSIPAYLPIVNIDTDMIIPKQFLKTIKRTGLGKNLFFEMRYDDNGNEIKDFILNQKPHNQSKILIAGKNFGCGSSREHAPWALLDFGITCVISSSYADIFYSNCFKNGILPITLPEEKIKELSEYSKRKEEISIDLNEEKIIFGNSEIKFDIDPFKKKCLLEGLDDIALSLAKKEKIITFEENLKNNKPWIFNDKN.

This sequence belongs to the LeuD family. LeuD type 1 subfamily. Heterodimer of LeuC and LeuD.

It catalyses the reaction (2R,3S)-3-isopropylmalate = (2S)-2-isopropylmalate. It functions in the pathway amino-acid biosynthesis; L-leucine biosynthesis; L-leucine from 3-methyl-2-oxobutanoate: step 2/4. Its function is as follows. Catalyzes the isomerization between 2-isopropylmalate and 3-isopropylmalate, via the formation of 2-isopropylmaleate. The protein is 3-isopropylmalate dehydratase small subunit of Pelagibacter ubique (strain HTCC1062).